We begin with the raw amino-acid sequence, 487 residues long: Arginine ADP-riboxanase OspC3 (487 aa).

The span at 1 to 14 shows a compositional bias: polar residues; the sequence is MRVETHSPSFTNPN. The tract at residues 1 to 41 is disordered; that stretch reads MRVETHSPSFTNPNPAEACSGDPTEMGSRLSGVSRAPLPHA. Residues H137, Q138, S139, S164, N167, and T168 each coordinate NAD(+). The active site involves E325. ANK repeat units lie at residues 368-398 and 444-473; these read DAVT…EAKD and RGDT…DRNL.

This sequence belongs to the OspC family.

The protein localises to the secreted. It localises to the host cytoplasm. The catalysed reaction is L-arginyl-[protein] + NAD(+) = ADP-riboxanated L-argininyl-[protein] + nicotinamide + NH4(+) + H(+). Its function is as follows. ADP-riboxanase effector that inhibits host cell pyroptosis. Acts by mediating arginine ADP-riboxanation of host CASP4/CASP11, blocking CASP4/CASP11 autoprocessing. This prevents CASP4 activation and ability to recognize and cleave GSDMD, thereby inhibiting LPS-induced pyroptosis. ADP-riboxanation takes place in two steps: OspC3 first catalyzes ADP-ribosylation of target Arg, and then initiates a deamination to remove one N-omega group. This chain is Arginine ADP-riboxanase OspC3, found in Chromobacterium sp. (strain ATCC 53434 / SC 14030).